A 511-amino-acid chain; its full sequence is 2-isopropylmalate synthase (511 aa).

A Pyruvate carboxyltransferase domain is found at 5 to 267 (LIVFDTTLRD…DTNVDISQIV (263 aa)). Mn(2+)-binding residues include aspartate 14, histidine 202, histidine 204, and asparagine 238. The interval 393–511 (KLSWLKVVSE…YPVERAYPQV (119 aa)) is regulatory domain.

Belongs to the alpha-IPM synthase/homocitrate synthase family. LeuA type 1 subfamily. Homodimer. The cofactor is Mn(2+).

The protein resides in the cytoplasm. It catalyses the reaction 3-methyl-2-oxobutanoate + acetyl-CoA + H2O = (2S)-2-isopropylmalate + CoA + H(+). It functions in the pathway amino-acid biosynthesis; L-leucine biosynthesis; L-leucine from 3-methyl-2-oxobutanoate: step 1/4. Functionally, catalyzes the condensation of the acetyl group of acetyl-CoA with 3-methyl-2-oxobutanoate (2-ketoisovalerate) to form 3-carboxy-3-hydroxy-4-methylpentanoate (2-isopropylmalate). This chain is 2-isopropylmalate synthase, found in Nitrosococcus oceani (strain ATCC 19707 / BCRC 17464 / JCM 30415 / NCIMB 11848 / C-107).